The primary structure comprises 194 residues: ATP synthase subunit delta (194 aa).

The protein belongs to the ATPase delta chain family. In terms of assembly, F-type ATPases have 2 components, F(1) - the catalytic core - and F(0) - the membrane proton channel. F(1) has five subunits: alpha(3), beta(3), gamma(1), delta(1), epsilon(1). F(0) has three main subunits: a(1), b(2) and c(10-14). The alpha and beta chains form an alternating ring which encloses part of the gamma chain. F(1) is attached to F(0) by a central stalk formed by the gamma and epsilon chains, while a peripheral stalk is formed by the delta and b chains.

The protein localises to the cell inner membrane. Its function is as follows. F(1)F(0) ATP synthase produces ATP from ADP in the presence of a proton or sodium gradient. F-type ATPases consist of two structural domains, F(1) containing the extramembraneous catalytic core and F(0) containing the membrane proton channel, linked together by a central stalk and a peripheral stalk. During catalysis, ATP synthesis in the catalytic domain of F(1) is coupled via a rotary mechanism of the central stalk subunits to proton translocation. Functionally, this protein is part of the stalk that links CF(0) to CF(1). It either transmits conformational changes from CF(0) to CF(1) or is implicated in proton conduction. The chain is ATP synthase subunit delta from Bartonella bacilliformis (strain ATCC 35685 / KC583 / Herrer 020/F12,63).